The chain runs to 243 residues: Toxin CcTX-1 (243 aa).

A compositionally biased stretch (basic and acidic residues) spans 1–25; it reads SSPEKKNDMSKPGRMRFDNKKEPRS. The tract at residues 1-48 is disordered; the sequence is SSPEKKNDMSKPGRMRFDNKKEPRSSAKNSGNGYGCVDVNAGREPLTG.

Post-translationally, contains disulfide bonds. As to expression, nematocytes.

The protein resides in the secreted. It is found in the nematocyst. It localises to the target cell membrane. Its function is as follows. Has potent hemolytic activity. Is lethal to crayfish. Causes cutaneous inflammation in humans. May act as a pore-forming toxin, disrupting normal transmembrane ion concentration gradients in susceptible cells. In Cyanea capillata (Lion's mane jellyfish), this protein is Toxin CcTX-1.